The following is a 102-amino-acid chain: Large ribosomal subunit protein uL23 (102 aa).

The protein belongs to the universal ribosomal protein uL23 family. In terms of assembly, part of the 50S ribosomal subunit. Contacts protein L29, and trigger factor when it is bound to the ribosome.

Functionally, one of the early assembly proteins it binds 23S rRNA. One of the proteins that surrounds the polypeptide exit tunnel on the outside of the ribosome. Forms the main docking site for trigger factor binding to the ribosome. The chain is Large ribosomal subunit protein uL23 from Methylobacillus flagellatus (strain ATCC 51484 / DSM 6875 / VKM B-1610 / KT).